A 185-amino-acid chain; its full sequence is Ribosome-recycling factor (185 aa).

The disordered stretch occupies residues 136–159 (NEQLKSQQKDGKMSEDELKRSQDE).

It belongs to the RRF family.

The protein resides in the cytoplasm. Responsible for the release of ribosomes from messenger RNA at the termination of protein biosynthesis. May increase the efficiency of translation by recycling ribosomes from one round of translation to another. This Pelotomaculum thermopropionicum (strain DSM 13744 / JCM 10971 / SI) protein is Ribosome-recycling factor.